Here is a 314-residue protein sequence, read N- to C-terminus: WD repeat-containing protein 38 (314 aa).

WD repeat units follow at residues 19–58, 61–100, 103–142, 145–184, 190–228, 231–272, and 274–312; these read QHGGEVNSSAFSPDGQMLLTGSEDGCVYGWETRSGQLLWR, GHTGPVKFCRFSPDGHLFASASCDCTVRLWDVARAKCLRV, GHQRSVETVSFSPDSRQLASGGWDKRVMLWDVQSGQMLRL, GHRDSIQSSDFSPTVNCLATGSWDSTVHIWDLRMVTPAVS, GHSANISCLCYSASGLLASGSWDKTIHIWKPTTSSLLIQ, GHVT…ETLK, and VLDVAHTCAFTPDGKILVSGAADQTRRQISRTSKSPRDP. The disordered stretch occupies residues 294–314; sequence AADQTRRQISRTSKSPRDPQT.

The chain is WD repeat-containing protein 38 (WDR38) from Homo sapiens (Human).